The following is a 256-amino-acid chain: Thiazole synthase (256 aa).

K95 serves as the catalytic Schiff-base intermediate with DXP. 1-deoxy-D-xylulose 5-phosphate is bound by residues G156, 182 to 183 (AG), and 204 to 205 (NT).

Belongs to the ThiG family. In terms of assembly, homotetramer. Forms heterodimers with either ThiH or ThiS.

It is found in the cytoplasm. The enzyme catalyses [ThiS sulfur-carrier protein]-C-terminal-Gly-aminoethanethioate + 2-iminoacetate + 1-deoxy-D-xylulose 5-phosphate = [ThiS sulfur-carrier protein]-C-terminal Gly-Gly + 2-[(2R,5Z)-2-carboxy-4-methylthiazol-5(2H)-ylidene]ethyl phosphate + 2 H2O + H(+). Its pathway is cofactor biosynthesis; thiamine diphosphate biosynthesis. Functionally, catalyzes the rearrangement of 1-deoxy-D-xylulose 5-phosphate (DXP) to produce the thiazole phosphate moiety of thiamine. Sulfur is provided by the thiocarboxylate moiety of the carrier protein ThiS. In vitro, sulfur can be provided by H(2)S. This is Thiazole synthase from Salmonella typhi.